Consider the following 334-residue polypeptide: GTPase Obg (334 aa).

The Obg domain occupies M1 to L159. Residues A160–Q331 enclose the OBG-type G domain. GTP-binding positions include G166 to S173, F191 to Y195, D212 to G215, N282 to D285, and S312 to A314. 2 residues coordinate Mg(2+): S173 and T193.

This sequence belongs to the TRAFAC class OBG-HflX-like GTPase superfamily. OBG GTPase family. In terms of assembly, monomer. It depends on Mg(2+) as a cofactor.

The protein resides in the cytoplasm. Functionally, an essential GTPase which binds GTP, GDP and possibly (p)ppGpp with moderate affinity, with high nucleotide exchange rates and a fairly low GTP hydrolysis rate. Plays a role in control of the cell cycle, stress response, ribosome biogenesis and in those bacteria that undergo differentiation, in morphogenesis control. In Francisella tularensis subsp. mediasiatica (strain FSC147), this protein is GTPase Obg.